Reading from the N-terminus, the 191-residue chain is RRP15-like protein (191 aa).

Residues 1 to 11 (MSTKNRDRLVV) show a composition bias toward basic and acidic residues. A disordered region spans residues 1–52 (MSTKNRDRLVVTEDSDDDNEREEMSSGGESGEEGPSSVDGGAGDADETVAFP). The stretch at 53-84 (AIERRKKKVIKKLTKKEQSLKKSVKEYRIKLA) forms a coiled coil. Over residues 119 to 153 (QKTMSDAVKEKMTARERREARQRFDGKNFDSDRFA) the composition is skewed to basic and acidic residues. Residues 119–191 (QKTMSDAVKE…IDTGNYSDED (73 aa)) form a disordered region. The span at 166–191 (GEDDDGEDQMDIGEEQIDTGNYSDED) shows a compositional bias: acidic residues.

Belongs to the RRP15 family.

This chain is RRP15-like protein, found in Caenorhabditis elegans.